Consider the following 728-residue polypeptide: MSNETKCPFNHTAGSGTTNKDWWPNQLNLNVLHRHSALSDPMDPDFDYAEAFKKLDLAAVKQDLHALMTTSQDWWPADFGHYGGLFVRMAWHSAGTYRTADGRGGAGGGQQRFAPLNSWPDNVSLDKARRLLWPIKQKYGRNISWADLLILTGNVALESMGFKTFGYAGGRADTWEPDDVYWGSEKIWLELSGGPNSRYTGKRELESPLAAVQMGLIYVNPEGPDGNPDPVAAAHDIRETFARMAMNDEETVALIAGGHTFGKTHGAGPASNVGPEPEAAGLEEQGLGWKSTFGTGKGKDTITSGLEVTWTSTPTKWSNDFFKHLFSYEWELTKSPAGAHQWVAKDAGEVIPDAYDASKKHRPTMLTTDLSLRFDPAYEKISRRFYENPAEFADAFARAWFKLTHRDMGPRARYLGPEVPAEHLLWQDPIPAVDHPLIDAADVAALKAKVLATGLSVSQLVSTAWASAATFRGSDKRGGANGARIRLAPQKDWEVNQPAALATVLETLEGVQKAFNDAQTDGKKVSLADLIVLAGAAGVEQAAKNAGIAISVPFAPGRMDASQEETDVDAMAVLEPVADGFRNYLKSAYKTPAEALLVDKAQLLTLTAPEMTVLVGGLRVLGANVGDSKHGVFTDRPGTLSNDFFANLLDMGTEWKPVSAANDVFEGRDRATGAVKWTGTRVDLIFGSHSQLRALAEVYGSADAQEKFVRDFVAAWNKVMNLDRFDLA.

The tryptophyl-tyrosyl-methioninium (Trp-Tyr) (with M-244) cross-link spans 91–218 (WHSAGTYRTA…LAAVQMGLIY (128 aa)). Histidine 92 acts as the Proton acceptor in catalysis. Residues 218 to 244 (YVNPEGPDGNPDPVAAAHDIRETFARM) constitute a cross-link (tryptophyl-tyrosyl-methioninium (Tyr-Met) (with W-91)). Histidine 259 lines the heme b pocket.

This sequence belongs to the peroxidase family. Peroxidase/catalase subfamily. Homodimer or homotetramer. Requires heme b as cofactor. In terms of processing, formation of the three residue Trp-Tyr-Met cross-link is important for the catalase, but not the peroxidase activity of the enzyme.

The enzyme catalyses H2O2 + AH2 = A + 2 H2O. It carries out the reaction 2 H2O2 = O2 + 2 H2O. Its function is as follows. Bifunctional enzyme with both catalase and broad-spectrum peroxidase activity. This is Catalase-peroxidase 1 from Burkholderia cenocepacia (strain HI2424).